Reading from the N-terminus, the 147-residue chain is D-aminoacyl-tRNA deacylase (147 aa).

The Gly-cisPro motif, important for rejection of L-amino acids motif lies at 136–137 (GP).

The protein belongs to the DTD family. As to quaternary structure, homodimer.

The protein localises to the cytoplasm. It catalyses the reaction glycyl-tRNA(Ala) + H2O = tRNA(Ala) + glycine + H(+). The catalysed reaction is a D-aminoacyl-tRNA + H2O = a tRNA + a D-alpha-amino acid + H(+). Its function is as follows. An aminoacyl-tRNA editing enzyme that deacylates mischarged D-aminoacyl-tRNAs. Also deacylates mischarged glycyl-tRNA(Ala), protecting cells against glycine mischarging by AlaRS. Acts via tRNA-based rather than protein-based catalysis; rejects L-amino acids rather than detecting D-amino acids in the active site. By recycling D-aminoacyl-tRNA to D-amino acids and free tRNA molecules, this enzyme counteracts the toxicity associated with the formation of D-aminoacyl-tRNA entities in vivo and helps enforce protein L-homochirality. This chain is D-aminoacyl-tRNA deacylase, found in Streptococcus pneumoniae (strain Taiwan19F-14).